Consider the following 552-residue polypeptide: 5'-AMP-activated protein kinase catalytic subunit alpha-2 (552 aa).

The region spanning 16–268 (YVLGDTLGVG…IKDIREHEWF (253 aa)) is the Protein kinase domain. Residues 22 to 30 (LGVGTFGKV) and Lys-45 each bind ATP. Residue Asp-139 is the Proton acceptor of the active site. Thr-172 bears the Phosphothreonine; by LKB1 and CaMKK2 mark. At Thr-258 the chain carries Phosphothreonine. Residues 291–376 (EAVKEVCEKF…PERMPPLIAD (86 aa)) form an AIS region. Position 377 is a phosphoserine (Ser-377). The interval 478-519 (EQRSGSSTPQRSCSAAGLHRPRSSLDSVTAESHSLSGSLSGS) is disordered. The segment covering 480 to 490 (RSGSSTPQRSC) has biased composition (polar residues). Residue Ser-491 is modified to Phosphoserine. Over residues 509 to 519 (SHSLSGSLSGS) the composition is skewed to low complexity.

Belongs to the protein kinase superfamily. CAMK Ser/Thr protein kinase family. SNF1 subfamily. As to quaternary structure, AMPK is a heterotrimer of an alpha catalytic subunit (PRKAA1 or PRKAA2), a beta (PRKAB1 or PRKAB2) and a gamma non-catalytic subunits (PRKAG1, PRKAG2 or PRKAG3). Interacts with FNIP1 and FNIP2. Interacts with DUSP29. Interacts with ARF6. The phosphorylated form at Thr-172 mediated by CamKK2 interacts with ACSS2. Mg(2+) is required as a cofactor. Ubiquitinated. Post-translationally, phosphorylated at Thr-172 by STK11/LKB1 in complex with STE20-related adapter-alpha (STRADA) pseudo kinase and CAB39. Also phosphorylated at Thr-172 by CAMKK2; triggered by a rise in intracellular calcium ions, without detectable changes in the AMP/ATP ratio. CAMKK1 can also phosphorylate Thr-172, but at much lower level. Dephosphorylated by protein phosphatase 2A and 2C (PP2A and PP2C). Phosphorylated by ULK1; leading to negatively regulate AMPK activity and suggesting the existence of a regulatory feedback loop between ULK1 and AMPK. Dephosphorylated by PPM1A and PPM1B at Thr-172 (mediated by STK11/LKB1).

The protein localises to the cytoplasm. The protein resides in the nucleus. The enzyme catalyses L-seryl-[protein] + ATP = O-phospho-L-seryl-[protein] + ADP + H(+). It carries out the reaction L-threonyl-[protein] + ATP = O-phospho-L-threonyl-[protein] + ADP + H(+). It catalyses the reaction L-seryl-[acetyl-CoA carboxylase] + ATP = O-phospho-L-seryl-[acetyl-CoA carboxylase] + ADP + H(+). The catalysed reaction is L-seryl-[3-hydroxy-3-methylglutaryl-coenzyme A reductase] + ATP = O-phospho-L-seryl-[3-hydroxy-3-methylglutaryl-coenzyme A reductase] + ADP + H(+). Its activity is regulated as follows. Activated by phosphorylation on Thr-172. Binding of AMP to non-catalytic gamma subunit (PRKAG1, PRKAG2 or PRKAG3) results in allosteric activation, inducing phosphorylation on Thr-172. AMP-binding to gamma subunit also sustains activity by preventing dephosphorylation of Thr-172. ADP also stimulates Thr-172 phosphorylation, without stimulating already phosphorylated AMPK. ATP promotes dephosphorylation of Thr-172, rendering the enzyme inactive. Under physiological conditions AMPK mainly exists in its inactive form in complex with ATP, which is much more abundant than AMP. Selectively inhibited by compound C (6-[4-(2-Piperidin-1-yl-ethoxy)-phenyl)]-3-pyridin-4-yl-pyyrazolo[1,5-a] pyrimidine. Activated by resveratrol, a natural polyphenol present in red wine, and S17834, a synthetic polyphenol. Salicylate/aspirin directly activates kinase activity, primarily by inhibiting Thr-172 dephosphorylation. Catalytic subunit of AMP-activated protein kinase (AMPK), an energy sensor protein kinase that plays a key role in regulating cellular energy metabolism. In response to reduction of intracellular ATP levels, AMPK activates energy-producing pathways and inhibits energy-consuming processes: inhibits protein, carbohydrate and lipid biosynthesis, as well as cell growth and proliferation. AMPK acts via direct phosphorylation of metabolic enzymes, and by longer-term effects via phosphorylation of transcription regulators. Regulates lipid synthesis by phosphorylating and inactivating lipid metabolic enzymes such as ACACA, ACACB, GYS1, HMGCR and LIPE; regulates fatty acid and cholesterol synthesis by phosphorylating acetyl-CoA carboxylase (ACACA and ACACB) and hormone-sensitive lipase (LIPE) enzymes, respectively. Promotes lipolysis of lipid droplets by mediating phosphorylation of isoform 1 of CHKA (CHKalpha2). Regulates insulin-signaling and glycolysis by phosphorylating IRS1, PFKFB2 and PFKFB3. Involved in insulin receptor/INSR internalization. AMPK stimulates glucose uptake in muscle by increasing the translocation of the glucose transporter SLC2A4/GLUT4 to the plasma membrane, possibly by mediating phosphorylation of TBC1D4/AS160. Regulates transcription and chromatin structure by phosphorylating transcription regulators involved in energy metabolism such as CRTC2/TORC2, FOXO3, histone H2B, HDAC5, MEF2C, MLXIPL/ChREBP, EP300, HNF4A, p53/TP53, SREBF1, SREBF2 and PPARGC1A. Acts as a key regulator of glucose homeostasis in liver by phosphorylating CRTC2/TORC2, leading to CRTC2/TORC2 sequestration in the cytoplasm. In response to stress, phosphorylates 'Ser-36' of histone H2B (H2BS36ph), leading to promote transcription. Acts as a key regulator of cell growth and proliferation by phosphorylating FNIP1, TSC2, RPTOR, WDR24 and ATG1/ULK1: in response to nutrient limitation, negatively regulates the mTORC1 complex by phosphorylating RPTOR component of the mTORC1 complex and by phosphorylating and activating TSC2. Also phosphorylates and inhibits GATOR2 subunit WDR24 in response to nutrient limitation, leading to suppress glucose-mediated mTORC1 activation. In response to energetic stress, phosphorylates FNIP1, inactivating the non-canonical mTORC1 signaling, thereby promoting nuclear translocation of TFEB and TFE3, and inducing transcription of lysosomal or autophagy genes. In response to nutrient limitation, promotes autophagy by phosphorylating and activating ATG1/ULK1. In that process also activates WDR45/WIPI4. Phosphorylates CASP6, thereby preventing its autoprocessing and subsequent activation. AMPK also acts as a regulator of circadian rhythm by mediating phosphorylation of CRY1, leading to destabilize it. May regulate the Wnt signaling pathway by phosphorylating CTNNB1, leading to stabilize it. Also acts as a regulator of cellular polarity by remodeling the actin cytoskeleton; probably by indirectly activating myosin. Also phosphorylates CFTR, EEF2K, KLC1, NOS3 and SLC12A1. Plays an important role in the differential regulation of pro-autophagy (composed of PIK3C3, BECN1, PIK3R4 and UVRAG or ATG14) and non-autophagy (composed of PIK3C3, BECN1 and PIK3R4) complexes, in response to glucose starvation. Can inhibit the non-autophagy complex by phosphorylating PIK3C3 and can activate the pro-autophagy complex by phosphorylating BECN1. Upon glucose starvation, promotes ARF6 activation in a kinase-independent manner leading to cell migration. Upon glucose deprivation mediates the phosphorylation of ACSS2 at 'Ser-659', which exposes the nuclear localization signal of ACSS2, required for its interaction with KPNA1 and nuclear translocation. Upon stress, regulates mitochondrial fragmentation through phosphorylation of MTFR1L. The chain is 5'-AMP-activated protein kinase catalytic subunit alpha-2 (PRKAA2) from Sus scrofa (Pig).